The chain runs to 764 residues: Thyrotropin receptor (764 aa).

The first 21 residues, 1-21 (MRPGSLLLLVLLLALSRSLRG), serve as a signal peptide directing secretion. Residues 22–413 (KECASPPCEC…EFNPCEDIMG (392 aa)) are Extracellular-facing. The cysteines at positions 31 and 41 are disulfide-linked. Residues asparagine 77 and asparagine 99 are each glycosylated (N-linked (GlcNAc...) asparagine). 7 LRR repeats span residues 100-124 (LSKM…ALTE), 125-150 (LPLL…IYST), 151-174 (DIFF…AFQG), 176-199 (CNET…AFNG), 200-223 (TKLD…AFGG), 225-248 (YSGP…GLEH), and 264-288 (PLSL…AFKN). Residues asparagine 177 and asparagine 198 are each glycosylated (N-linked (GlcNAc...) asparagine). Asparagine 302 carries N-linked (GlcNAc...) asparagine glycosylation. The residue at position 385 (tyrosine 385) is a Sulfotyrosine. The chain crosses the membrane as a helical span at residues 414–441 (YRFLRIVVWFVSLLALLGNIFVLLILLT). Topologically, residues 442-450 (SHYKLTVPR) are cytoplasmic. The chain crosses the membrane as a helical span at residues 451 to 473 (FLMCNLAFADFCMGVYLLLIASV). Topologically, residues 474-494 (DLYTHSEYYNHAIDWQTGPGC) are extracellular. Cysteine 494 and cysteine 569 form a disulfide bridge. The helical transmembrane segment at 495-517 (NTAGFFTVFASELSVYTLTVITL) threads the bilayer. The Cytoplasmic segment spans residues 518-537 (ERWYAITFAMRLDRKIRLRH). A helical transmembrane segment spans residues 538-560 (AYTIMAGGWVSCFLLALLPMVGI). Residues 561-580 (SSYAKVSICLPMDTDTPLAL) lie on the Extracellular side of the membrane. A helical membrane pass occupies residues 581-602 (AYIVLVLLLNVVAFVVVCSCYV). Residues 603 to 625 (KIYITVRNPQYNPRDKDTKIAKR) lie on the Cytoplasmic side of the membrane. The chain crosses the membrane as a helical span at residues 626–649 (MAVLIFTDFMCMAPISFYALSALM). Residues 650-660 (NKPLITVTNSK) are Extracellular-facing. A helical membrane pass occupies residues 661-682 (ILLVLFYPLNSCANPFLYAIFT). The Cytoplasmic portion of the chain corresponds to 683 to 764 (KAFQRDVFIL…ISEEYKQTAL (82 aa)). The short motif at 762-764 (TAL) is the PDZ-binding element.

This sequence belongs to the G-protein coupled receptor 1 family. FSH/LSH/TSH subfamily. In terms of assembly, interacts with heterodimer GPHA2:GPHB5; this interaction stimulates cAMP production. Interacts (via the PDZ-binding motif) with SCRIB; regulates TSHR trafficking and function. Post-translationally, glycosylated. Sulfated. Sulfation on Tyr-385 plays a role in thyrotropin receptor binding and activation.

The protein resides in the cell membrane. It is found in the basolateral cell membrane. Functionally, receptor for the thyroid-stimulating hormone (TSH) or thyrotropin. Also acts as a receptor for the heterodimeric glycoprotein hormone (GPHA2:GPHB5) or thyrostimulin. The activity of this receptor is mediated by G proteins which activate adenylate cyclase. Plays a central role in controlling thyroid cell metabolism. The sequence is that of Thyrotropin receptor (Tshr) from Mus musculus (Mouse).